We begin with the raw amino-acid sequence, 385 residues long: UPF0284 protein P9215_05181 (385 aa).

Belongs to the UPF0284 family.

This is UPF0284 protein P9215_05181 from Prochlorococcus marinus (strain MIT 9215).